Reading from the N-terminus, the 592-residue chain is Inactive heparanase-2 (592 aa).

The signal sequence occupies residues 1–38 (MRVLCAFPEAMASSSSRPPSCLALVALFLALLLHLSLS). N254 and N392 each carry an N-linked (GlcNAc...) asparagine glycan.

This sequence belongs to the glycosyl hydrolase 79 family. As to quaternary structure, interacts with HPSE. Interacts with SDC1 (via glycan chains).

Its subcellular location is the secreted. The protein localises to the extracellular space. It is found in the extracellular matrix. In terms of biological role, binds heparin and heparan sulfate with high affinity, but lacks heparanase activity. Inhibits HPSE, possibly by competing for its substrates (in vitro). The protein is Inactive heparanase-2 (Hpse2) of Mus musculus (Mouse).